A 170-amino-acid polypeptide reads, in one-letter code: Small ribosomal subunit protein uS15 (170 aa).

The span at 1–10 (MARMHSRKKG) shows a compositional bias: basic residues. The interval 1–20 (MARMHSRKKGSSGSRPPVVD) is disordered.

This sequence belongs to the universal ribosomal protein uS15 family. In terms of assembly, part of the 30S ribosomal subunit.

In Methanothrix thermoacetophila (strain DSM 6194 / JCM 14653 / NBRC 101360 / PT) (Methanosaeta thermophila), this protein is Small ribosomal subunit protein uS15.